The primary structure comprises 276 residues: Undecaprenyl-diphosphatase (276 aa).

7 consecutive transmembrane segments (helical) span residues 12–34 (LGIV…IVVG), 43–63 (TATA…MWEF), 85–105 (FNLL…ADLI), 108–128 (WLFN…IMLW), 185–205 (TEFS…YSLF), 218–238 (IFAI…RALL), and 249–269 (FAWY…LHLI).

This sequence belongs to the UppP family.

The protein localises to the cell inner membrane. It carries out the reaction di-trans,octa-cis-undecaprenyl diphosphate + H2O = di-trans,octa-cis-undecaprenyl phosphate + phosphate + H(+). Catalyzes the dephosphorylation of undecaprenyl diphosphate (UPP). Confers resistance to bacitracin. This is Undecaprenyl-diphosphatase from Ectopseudomonas mendocina (strain ymp) (Pseudomonas mendocina).